The primary structure comprises 132 residues: Small ribosomal subunit protein uS8 (132 aa).

It belongs to the universal ribosomal protein uS8 family. As to quaternary structure, part of the 30S ribosomal subunit. Contacts proteins S5 and S12.

In terms of biological role, one of the primary rRNA binding proteins, it binds directly to 16S rRNA central domain where it helps coordinate assembly of the platform of the 30S subunit. The chain is Small ribosomal subunit protein uS8 from Exiguobacterium sp. (strain ATCC BAA-1283 / AT1b).